Consider the following 249-residue polypeptide: EID1-like F-box protein 2 (249 aa).

The F-box domain maps to 16–68 (HCTKGHLSEEVLFLMVQHLNWNPNVIATLSCVCKWFDDLAKRLLWKEFCRARA).

The polypeptide is EID1-like F-box protein 2 (EDL2) (Arabidopsis thaliana (Mouse-ear cress)).